Here is a 367-residue protein sequence, read N- to C-terminus: Zinc finger CCCH domain-containing protein 56 (367 aa).

The segment at 38 to 80 (YNSQWNADGGGGGSSRAGSEQPPPGKKSRGGGGGEGGGNTSKS) is disordered. Positions 67-76 (GGGGGEGGGN) are enriched in gly residues. 3 C3H1-type zinc fingers span residues 87 to 114 (FFKT…HGME), 169 to 197 (AYKG…HDEQ), and 245 to 273 (NWKT…HGAA).

In Oryza sativa subsp. japonica (Rice), this protein is Zinc finger CCCH domain-containing protein 56.